The primary structure comprises 925 residues: Probable dipeptidyl-aminopeptidase B (925 aa).

Positions 1-104 (MTPYRDVPPV…RHAQKKGPGM (104 aa)) are disordered. Residues 1-110 (MTPYRDVPPV…GPGMDRGMRR (110 aa)) are Cytoplasmic-facing. Residues 31-40 (ESGSSVSTTS) are compositionally biased toward low complexity. Over residues 55 to 72 (LSEKQPRGDDNEDALKDE) the composition is skewed to basic and acidic residues. Residues 111–131 (ALLIAAGLLVSAWVAGLFVYI) form a helical; Signal-anchor for type II membrane protein membrane-spanning segment. Topologically, residues 132-925 (ATKSYKPASA…PKPNGKRRAA (794 aa)) are vacuolar. A glycan (N-linked (GlcNAc...) asparagine) is linked at asparagine 369. The active-site Charge relay system is the serine 773. The N-linked (GlcNAc...) asparagine glycan is linked to asparagine 832. Active-site charge relay system residues include aspartate 850 and histidine 883.

It belongs to the peptidase S9B family.

It is found in the vacuole membrane. The catalysed reaction is Release of an N-terminal dipeptide, Xaa-Yaa-|-Zaa-, from a polypeptide, preferentially when Yaa is Pro, provided Zaa is neither Pro nor hydroxyproline.. In terms of biological role, type IV dipeptidyl-peptidase which removes N-terminal dipeptides sequentially from polypeptides having unsubstituted N-termini provided that the penultimate residue is proline. This Chaetomium globosum (strain ATCC 6205 / CBS 148.51 / DSM 1962 / NBRC 6347 / NRRL 1970) (Soil fungus) protein is Probable dipeptidyl-aminopeptidase B (DAPB).